A 480-amino-acid polypeptide reads, in one-letter code: Protein nucleotidyltransferase YdiU (480 aa).

Positions 86, 88, 89, 109, 121, 122, 172, and 179 each coordinate ATP. Catalysis depends on aspartate 248, which acts as the Proton acceptor. Mg(2+)-binding residues include asparagine 249 and aspartate 258. Residue aspartate 258 coordinates ATP.

The protein belongs to the SELO family. Mg(2+) is required as a cofactor. The cofactor is Mn(2+).

The enzyme catalyses L-seryl-[protein] + ATP = 3-O-(5'-adenylyl)-L-seryl-[protein] + diphosphate. It carries out the reaction L-threonyl-[protein] + ATP = 3-O-(5'-adenylyl)-L-threonyl-[protein] + diphosphate. It catalyses the reaction L-tyrosyl-[protein] + ATP = O-(5'-adenylyl)-L-tyrosyl-[protein] + diphosphate. The catalysed reaction is L-histidyl-[protein] + UTP = N(tele)-(5'-uridylyl)-L-histidyl-[protein] + diphosphate. The enzyme catalyses L-seryl-[protein] + UTP = O-(5'-uridylyl)-L-seryl-[protein] + diphosphate. It carries out the reaction L-tyrosyl-[protein] + UTP = O-(5'-uridylyl)-L-tyrosyl-[protein] + diphosphate. In terms of biological role, nucleotidyltransferase involved in the post-translational modification of proteins. It can catalyze the addition of adenosine monophosphate (AMP) or uridine monophosphate (UMP) to a protein, resulting in modifications known as AMPylation and UMPylation. The chain is Protein nucleotidyltransferase YdiU from Klebsiella pneumoniae subsp. pneumoniae (strain ATCC 700721 / MGH 78578).